Reading from the N-terminus, the 1206-residue chain is DNA-directed RNA polymerase subunit beta' (1206 aa).

4 residues coordinate Zn(2+): cysteine 60, cysteine 62, cysteine 75, and cysteine 78. Positions 449, 451, and 453 each coordinate Mg(2+). Residues cysteine 818, cysteine 892, cysteine 899, and cysteine 902 each coordinate Zn(2+).

It belongs to the RNA polymerase beta' chain family. As to quaternary structure, the RNAP catalytic core consists of 2 alpha, 1 beta, 1 beta' and 1 omega subunit. When a sigma factor is associated with the core the holoenzyme is formed, which can initiate transcription. Requires Mg(2+) as cofactor. The cofactor is Zn(2+).

It catalyses the reaction RNA(n) + a ribonucleoside 5'-triphosphate = RNA(n+1) + diphosphate. Functionally, DNA-dependent RNA polymerase catalyzes the transcription of DNA into RNA using the four ribonucleoside triphosphates as substrates. The polypeptide is DNA-directed RNA polymerase subunit beta' (Shouchella clausii (strain KSM-K16) (Alkalihalobacillus clausii)).